A 475-amino-acid polypeptide reads, in one-letter code: Glycogen synthase (475 aa).

Lys15 is an ADP-alpha-D-glucose binding site.

The protein belongs to the glycosyltransferase 1 family. Bacterial/plant glycogen synthase subfamily.

It catalyses the reaction [(1-&gt;4)-alpha-D-glucosyl](n) + ADP-alpha-D-glucose = [(1-&gt;4)-alpha-D-glucosyl](n+1) + ADP + H(+). It participates in glycan biosynthesis; glycogen biosynthesis. Functionally, synthesizes alpha-1,4-glucan chains using ADP-glucose. The chain is Glycogen synthase from Kosmotoga olearia (strain ATCC BAA-1733 / DSM 21960 / TBF 19.5.1).